Here is a 529-residue protein sequence, read N- to C-terminus: Type I restriction enzyme EcoKI methylase subunit (529 aa).

S-adenosyl-L-methionine is bound by residues 148–153 (QYFTPR), 178–180 (TAG), and Glu216.

The protein belongs to the N(4)/N(6)-methyltransferase family. As to quaternary structure, the type I restriction/modification system is composed of three polypeptides R, M and S. The restriction enzyme has stoichiometry R(2)M(2)S(1). The methyltransferase is composed of M(2)S(1). (Microbial infection) Interacts with Escherichia phage T7 protein Ocr; this interaction leads to the inhibition of the methyltransferase restriction enzyme M.EcoKI composed of M(2)S(1).

The catalysed reaction is a 2'-deoxyadenosine in DNA + S-adenosyl-L-methionine = an N(6)-methyl-2'-deoxyadenosine in DNA + S-adenosyl-L-homocysteine + H(+). The subtype gamma methyltransferase (M) subunit of a type I restriction enzyme. The M and S subunits together form a methyltransferase (MTase) that methylates A-2 on the top and A-3 on the bottom strand of the sequence 5'-AACN(6)GTGC-3'. In the presence of the R subunit the complex can also act as an endonuclease, binding to the same target sequence but cutting the DNA some distance from this site. Whether the DNA is cut or modified depends on the methylation state of the target sequence. When the target site is unmodified, the DNA is cut. When the target site is hemimethylated, the complex acts as a maintenance MTase modifying the DNA so that both strands become methylated. After locating a non-methylated recognition site, the enzyme complex serves as a molecular motor that translocates DNA in an ATP-dependent manner until a collision occurs that triggers cleavage. This is Type I restriction enzyme EcoKI methylase subunit from Escherichia coli (strain K12).